The chain runs to 187 residues: PsbQ-like protein 3, chloroplastic (187 aa).

A chloroplast-targeting transit peptide spans Met-1–Ile-32. A thylakoid-targeting transit peptide spans Asp-33 to Arg-60.

It belongs to the PsbQ family. In terms of assembly, subunit of the lumenal protuberance of the NDH complex.

The protein localises to the plastid. The protein resides in the chloroplast thylakoid membrane. In terms of biological role, required for both formation and activity of the chloroplast NAD(P)H dehydrogenase (NDH) complex. The polypeptide is PsbQ-like protein 3, chloroplastic (PQL3) (Arabidopsis thaliana (Mouse-ear cress)).